Here is a 92-residue protein sequence, read N- to C-terminus: RIIa domain-containing protein 1 (92 aa).

The region spanning 43-77 (KEVEWLISGFFREIFLKRPDNILEFAADYFTDPRL) is the RIIa domain.

In Homo sapiens (Human), this protein is RIIa domain-containing protein 1 (RIIAD1).